The primary structure comprises 224 residues: Phosphoribosylformylglycinamidine synthase subunit PurQ (224 aa).

A Glutamine amidotransferase type-1 domain is found at 4–224; it reads RIGIITFPGT…YSVLDGVLAG (221 aa). C87 acts as the Nucleophile in catalysis. Residues H195 and E197 contribute to the active site.

As to quaternary structure, part of the FGAM synthase complex composed of 1 PurL, 1 PurQ and 2 PurS subunits.

The protein localises to the cytoplasm. The catalysed reaction is N(2)-formyl-N(1)-(5-phospho-beta-D-ribosyl)glycinamide + L-glutamine + ATP + H2O = 2-formamido-N(1)-(5-O-phospho-beta-D-ribosyl)acetamidine + L-glutamate + ADP + phosphate + H(+). It carries out the reaction L-glutamine + H2O = L-glutamate + NH4(+). The protein operates within purine metabolism; IMP biosynthesis via de novo pathway; 5-amino-1-(5-phospho-D-ribosyl)imidazole from N(2)-formyl-N(1)-(5-phospho-D-ribosyl)glycinamide: step 1/2. Part of the phosphoribosylformylglycinamidine synthase complex involved in the purines biosynthetic pathway. Catalyzes the ATP-dependent conversion of formylglycinamide ribonucleotide (FGAR) and glutamine to yield formylglycinamidine ribonucleotide (FGAM) and glutamate. The FGAM synthase complex is composed of three subunits. PurQ produces an ammonia molecule by converting glutamine to glutamate. PurL transfers the ammonia molecule to FGAR to form FGAM in an ATP-dependent manner. PurS interacts with PurQ and PurL and is thought to assist in the transfer of the ammonia molecule from PurQ to PurL. The protein is Phosphoribosylformylglycinamidine synthase subunit PurQ of Mycolicibacterium paratuberculosis (strain ATCC BAA-968 / K-10) (Mycobacterium paratuberculosis).